Consider the following 555-residue polypeptide: Protein peste (555 aa).

The Cytoplasmic segment spans residues 1-7 (MTSRTRH). A helical transmembrane segment spans residues 8 to 28 (CARLGIVLLGICCIASGIYLF). Residues 29–434 (RNWIDMFTRM…VRVSEEIAAD (406 aa)) are Extracellular-facing. Residues Asn-70, Asn-110, Asn-129, Asn-213, Asn-242, Asn-312, and Asn-342 are each glycosylated (N-linked (GlcNAc...) asparagine). Residues 435 to 455 (IALVPLIVLLGQIVTGILLAG) form a helical membrane-spanning segment. Residues 456-555 (GLICTCWYPT…SEDSPDVVVR (100 aa)) lie on the Cytoplasmic side of the membrane.

This sequence belongs to the CD36 family.

The protein resides in the cell membrane. Functionally, (Microbial infection) Plays a role in mycobacterial infection. Mediates infection by M.fortuitum and uptake of M.smegmatis. The chain is Protein peste from Drosophila melanogaster (Fruit fly).